Reading from the N-terminus, the 103-residue chain is UPF0134 protein MPN_484 (103 aa).

This sequence belongs to the UPF0134 family.

The sequence is that of UPF0134 protein MPN_484 from Mycoplasma pneumoniae (strain ATCC 29342 / M129 / Subtype 1) (Mycoplasmoides pneumoniae).